Here is a 397-residue protein sequence, read N- to C-terminus: Putative serine/threonine-protein kinase R301 (397 aa).

The Protein kinase domain occupies 25-397 (QIKSTSVGSG…IIRHFNSPRL (373 aa)). ATP is bound by residues 31–39 (VGSGGSDNI) and Lys-53. The Proton acceptor role is filled by Asp-218.

It belongs to the protein kinase superfamily. Ser/Thr protein kinase family.

It is found in the virion. It carries out the reaction L-seryl-[protein] + ATP = O-phospho-L-seryl-[protein] + ADP + H(+). The catalysed reaction is L-threonyl-[protein] + ATP = O-phospho-L-threonyl-[protein] + ADP + H(+). The chain is Putative serine/threonine-protein kinase R301 from Acanthamoeba polyphaga (Amoeba).